The following is a 161-amino-acid chain: Probable K(+)/H(+) antiporter subunit E (161 aa).

2 consecutive transmembrane segments (helical) span residues 4–21 (WFPY…WLLL) and 28–50 (GSIV…LQPA).

It belongs to the CPA3 antiporters (TC 2.A.63) subunit E family. In terms of assembly, may form a hetero-oligomeric complex that consists of six subunits: PhaAB, PhaC, PhaD, PhaE, PhaF and PhaG.

It is found in the cell membrane. Part of a K(+) efflux system which is required for the adaptation of R.meliloti to alkaline pH as well as for the infection process during symbiotic nodule development. This chain is Probable K(+)/H(+) antiporter subunit E (phaE), found in Rhizobium meliloti (strain 1021) (Ensifer meliloti).